Consider the following 174-residue polypeptide: Guided entry of tail-anchored proteins factor 1 (174 aa).

Residues 1-8 (MSSAAADH) are Lumenal-facing. The helical transmembrane segment at 9–29 (WAWLLVLSFVFGCNVLRVLLP) threads the bilayer. Residues 30-99 (SFSSFMSRVL…VKARTAQLAK (70 aa)) are Cytoplasmic-facing. Residues 39-94 (LQKDAEQESQMRAEIQDMKQELSTVNMMDEFARYARLERKINKMTDKLKTHVKART) adopt a coiled-coil conformation. The tract at residues 39 to 97 (LQKDAEQESQMRAEIQDMKQELSTVNMMDEFARYARLERKINKMTDKLKTHVKARTAQL) is interaction with GET3/TRC40. Residues 100-120 (IKWVISVAFYVLQAALMISLI) form a helical membrane-spanning segment. Residues 121–148 (WKYYSVPVAVVPSKWITPLDRLVAFPTR) are Lumenal-facing. Residues 149 to 169 (VAGGVGITCWILVCNKVVAIV) traverse the membrane as a helical segment. Residues 170–174 (LHPFS) lie on the Cytoplasmic side of the membrane.

It belongs to the WRB/GET1 family. In terms of assembly, component of the Golgi to ER traffic (GET) complex, which is composed of GET1/WRB, CAMLG/GET2 and GET3. Within the complex, GET1 and CAMLG form a heterotetramer which is stabilized by phosphatidylinositol binding and which binds to the GET3 homodimer. Interacts with CAMLG (via C-terminus). GET3 shows a higher affinity for CAMLG than for GET1.

The protein localises to the endoplasmic reticulum membrane. Its function is as follows. Required for the post-translational delivery of tail-anchored (TA) proteins to the endoplasmic reticulum. Together with CAMLG/GET2, acts as a membrane receptor for soluble GET3/TRC40, which recognizes and selectively binds the transmembrane domain of TA proteins in the cytosol. Required to ensure correct topology and ER insertion of CAMLG. This chain is Guided entry of tail-anchored proteins factor 1, found in Pongo abelii (Sumatran orangutan).